Reading from the N-terminus, the 202-residue chain is Cytochrome c oxidase assembly protein CtaG (202 aa).

Over Met-1–Arg-14 the chain is Cytoplasmic. Residues Arg-15 to Ala-37 form a helical; Signal-anchor for type II membrane protein membrane-spanning segment. Residues Val-38 to Gly-202 lie on the Periplasmic side of the membrane.

This sequence belongs to the COX11/CtaG family.

It localises to the cell inner membrane. Functionally, exerts its effect at some terminal stage of cytochrome c oxidase synthesis, probably by being involved in the insertion of the copper B into subunit I. The sequence is that of Cytochrome c oxidase assembly protein CtaG from Chelativorans sp. (strain BNC1).